We begin with the raw amino-acid sequence, 127 residues long: Large ribosomal subunit protein uL22 (127 aa).

This sequence belongs to the universal ribosomal protein uL22 family. In terms of assembly, part of the 50S ribosomal subunit.

Its function is as follows. This protein binds specifically to 23S rRNA; its binding is stimulated by other ribosomal proteins, e.g. L4, L17, and L20. It is important during the early stages of 50S assembly. It makes multiple contacts with different domains of the 23S rRNA in the assembled 50S subunit and ribosome. Functionally, the globular domain of the protein is located near the polypeptide exit tunnel on the outside of the subunit, while an extended beta-hairpin is found that lines the wall of the exit tunnel in the center of the 70S ribosome. This chain is Large ribosomal subunit protein uL22, found in Methylobacterium nodulans (strain LMG 21967 / CNCM I-2342 / ORS 2060).